Reading from the N-terminus, the 1068-residue chain is Protein AF-10 (1068 aa).

A PHD-type 1 zinc finger spans residues 22–74 (IGGCCVCSDERGWAENPLVYCDGHGCSVAVHQACYGIVQVPTGPWFCRKCESQ). The C2HC pre-PHD-type zinc-finger motif lies at 79–112 (RVRCELCPHKDGALKRTDNGGWAHVVCALYIPEV). The interval 106-190 (ALYIPEVQFA…EGNGADNVQY (85 aa)) is required for interaction with histone H3. Residues 135-198 (KTCYICDEQG…QYCGYCKYHF (64 aa)) form a PHD-type 2 zinc finger. Positions 207 to 260 (GSNRSYEQSLSDSSSHSQDKHHEKEKKKYKEKDKHKQKHKKQPEPSPALVPSLT) are disordered. Serine 217 carries the phosphoserine modification. Residues 223–240 (SQDKHHEKEKKKYKEKDK) show a composition bias toward basic and acidic residues. Serine 252 is modified (phosphoserine). A Glycyl lysine isopeptide (Lys-Gly) (interchain with G-Cter in SUMO2) cross-link involves residue lysine 280. The span at 296 to 305 (EVSAHTSSGK) shows a compositional bias: polar residues. Disordered regions lie at residues 296–416 (EVSA…SFSS) and 428–506 (SQPK…SVAS). Residues 306–317 (DVSEARGSEGKG) show a composition bias toward basic and acidic residues. Polar residues predominate over residues 340-351 (TAVSASSPFPQG). A compositionally biased stretch (low complexity) spans 352–372 (SFSGTPGSVKSSSGSSVQSPQ). 3 stretches are compositionally biased toward polar residues: residues 387–396 (YTHTQQPSST), 404–416 (SGSQ…SFSS), and 428–446 (SQPK…SSLP). The residue at position 436 (serine 436) is a Phosphoserine. The segment covering 465 to 483 (EKKRKGNKQSKHGPGRPKG) has biased composition (basic residues). Residues 490 to 506 (VSHLSVSSASPTSSVAS) show a composition bias toward low complexity. Serine 532 is subject to Phosphoserine. A compositionally biased stretch (low complexity) spans 583–594 (SGSGSSTPVSSS). 2 disordered regions span residues 583–613 (SGSG…LSPS) and 660–698 (SESS…NLQL). Residues 595-604 (HIPQQSSGHL) show a composition bias toward polar residues. A compositionally biased stretch (low complexity) spans 681–692 (SSPRGSLSPRSP). Phosphoserine occurs at positions 686, 688, and 691. A leucine-zipper region spans residues 752–780 (LQVENRRLEEQIKNLTAKKERLQLLNAQL). Disordered regions lie at residues 786-869 (AITT…VSGV) and 1040-1068 (PFLT…QEKS). Residues 787 to 816 (ITTNPSPSHQMHTYTAQTAPPPDSLNSSKS) are compositionally biased toward polar residues. 2 stretches are compositionally biased toward low complexity: residues 836–850 (LTSS…SALS) and 857–869 (QSPA…VSGV). Polar residues predominate over residues 1040-1054 (PFLTIHGDSTSQKVT).

As to quaternary structure, self-associates. Interacts with FSTL3; the interaction enhances MLLT10 in vitro transcriptional activity and self-association. Interacts with YEATS4. Interacts with SS18. Interacts with DOT1L. Interacts with histone H3; interaction is necessary for MLLT10 binding to nucleosomes; interaction is inhibited by histone H3 'Lys-27' methylations (H3K27me1, H3K27me2 and H3K27me3) amd acetylation; interaction stabilizes association of MLLT10 at chromatin; interaction is essential for histone H3 'Lys-79' dimethylation (H3K79me2).

The protein localises to the nucleus. In terms of biological role, probably involved in transcriptional regulation. Binds to cruciform DNA. In cells, binding to unmodified histone H3 regulates DOT1L functions including histone H3 'Lys-79' dimethylation (H3K79me2) and gene activation. The chain is Protein AF-10 from Mus musculus (Mouse).